Here is a 261-residue protein sequence, read N- to C-terminus: Eukaryotic translation initiation factor 3 subunit G (261 aa).

Residues 156 to 180 (QDADSKNALGLRGDGRQMERNRSDE) are disordered. The segment covering 168-180 (GDGRQMERNRSDE) has biased composition (basic and acidic residues). The region spanning 181 to 259 (NTCRVTNLPQ…MVLKVEWTRP (79 aa)) is the RRM domain.

The protein belongs to the eIF-3 subunit G family. Component of the eukaryotic translation initiation factor 3 (eIF-3) complex.

It is found in the cytoplasm. Functionally, RNA-binding component of the eukaryotic translation initiation factor 3 (eIF-3) complex, which is involved in protein synthesis of a specialized repertoire of mRNAs and, together with other initiation factors, stimulates binding of mRNA and methionyl-tRNAi to the 40S ribosome. The eIF-3 complex specifically targets and initiates translation of a subset of mRNAs involved in cell proliferation. This subunit can bind 18S rRNA. This chain is Eukaryotic translation initiation factor 3 subunit G, found in Caenorhabditis briggsae.